We begin with the raw amino-acid sequence, 161 residues long: Protein-export protein SecB (161 aa).

Belongs to the SecB family. In terms of assembly, homotetramer, a dimer of dimers. One homotetramer interacts with 1 SecA dimer.

The protein localises to the cytoplasm. One of the proteins required for the normal export of preproteins out of the cell cytoplasm. It is a molecular chaperone that binds to a subset of precursor proteins, maintaining them in a translocation-competent state. It also specifically binds to its receptor SecA. This Afipia carboxidovorans (strain ATCC 49405 / DSM 1227 / KCTC 32145 / OM5) (Oligotropha carboxidovorans) protein is Protein-export protein SecB.